Consider the following 562-residue polypeptide: NAD-dependent malic enzyme (562 aa).

The active-site Proton donor is the Tyr-101. Arg-154 is an NAD(+) binding site. The active-site Proton acceptor is Lys-172. A divalent metal cation is bound by residues Glu-243, Asp-244, and Asp-267. Positions 267 and 415 each coordinate NAD(+).

Belongs to the malic enzymes family. In terms of assembly, homotetramer. The cofactor is Mg(2+). Requires Mn(2+) as cofactor.

It catalyses the reaction (S)-malate + NAD(+) = pyruvate + CO2 + NADH. The enzyme catalyses oxaloacetate + H(+) = pyruvate + CO2. In Shewanella denitrificans (strain OS217 / ATCC BAA-1090 / DSM 15013), this protein is NAD-dependent malic enzyme.